Here is a 603-residue protein sequence, read N- to C-terminus: Arginine--tRNA ligase (603 aa).

The 'HIGH' region motif lies at 143 to 153; that stretch reads PNIAKEMHVGH.

This sequence belongs to the class-I aminoacyl-tRNA synthetase family. As to quaternary structure, monomer.

Its subcellular location is the cytoplasm. It carries out the reaction tRNA(Arg) + L-arginine + ATP = L-arginyl-tRNA(Arg) + AMP + diphosphate. This chain is Arginine--tRNA ligase, found in Prochlorococcus marinus (strain SARG / CCMP1375 / SS120).